Consider the following 496-residue polypeptide: uncharacterized protein (496 aa).

The next 13 helical transmembrane spans lie at Leu-5 to Ala-25, Phe-45 to Leu-65, Val-77 to Pro-97, Leu-127 to Ile-147, Val-161 to Ile-181, Ile-193 to Gly-213, Ile-239 to Ala-259, Phe-278 to Leu-298, Phe-325 to Ala-345, Met-374 to Val-394, Leu-396 to Phe-416, Ala-424 to Ser-444, and Glu-450 to Val-470.

It belongs to the sodium:solute symporter (SSF) (TC 2.A.21) family.

It localises to the cell membrane. This is an uncharacterized protein from Bacillus subtilis (strain 168).